The primary structure comprises 107 residues: U1-lycotoxin-Ls1s (107 aa).

An N-terminal signal peptide occupies residues 1–20 (MMKVLVVVALLVTLISYSSS). Residues 21–41 (EGIDDLEADELLSLMANEQTR) constitute a propeptide that is removed on maturation. Cystine bridges form between Cys44-Cys59, Cys51-Cys68, Cys58-Cys86, and Cys70-Cys84.

This sequence belongs to the neurotoxin 19 (CSTX) family. 04 (U1-Lctx) subfamily. As to expression, expressed by the venom gland.

The protein localises to the secreted. This Lycosa singoriensis (Wolf spider) protein is U1-lycotoxin-Ls1s.